The chain runs to 870 residues: Protein RRP6-like 2 (870 aa).

The 166-residue stretch at 263–428 folds into the 3'-5' exonuclease domain; it reads VQEVKDLKEL…YIYDLIKLEL (166 aa). In terms of domain architecture, HRDC spans 479–559; it reads NAAQLAIVAG…RQSMQHYAAF (81 aa). Disordered stretches follow at residues 583–605, 649–668, 688–775, and 821–870; these read SEKK…SSQL, GALL…EKVK, TEKV…EDEP, and FGEG…SFKN. 2 stretches are compositionally biased toward basic and acidic residues: residues 720–729 and 821–834; these read SKEDGVKELK and FGEG…KREA. The segment covering 840-849 has biased composition (polar residues); the sequence is KGSTQEQSEF.

It is found in the nucleus. It localises to the nucleolus. The protein resides in the cytoplasm. Its function is as follows. Acts as an important epigenetic regulator through multiple silencing mechanisms. Involved in association with RRP6L1 in the silencing of the solo LTR locus. Controls levels of non-coding RNAs (ncRNAs) from the solo LTR locus. Seems to function independently of the RNA-mediated gene silencing (RdDM) pathway. Functions redundantly with RRP6L1 in the regulation of FLC locus. Participates in the maintenance of trimethylated 'Lys-27' (H3K27me3) at FLC locus via the regulation of antisense long non-coding RNAs (lncRNAs) and the regulation of diverse antisense RNAs derived from the FLC locus. Seems not involved in the exosomal RNA degradation. May be involved in poly(A)-mediated RNA degradation. This is Protein RRP6-like 2 from Arabidopsis thaliana (Mouse-ear cress).